Here is a 455-residue protein sequence, read N- to C-terminus: Chromosomal replication initiator protein DnaA (455 aa).

Residues Met-1 to Asp-77 are domain I, interacts with DnaA modulators. Residues Asp-77–Ser-116 form a domain II region. The tract at residues Gly-117 to Ala-333 is domain III, AAA+ region. Residues Gly-161, Gly-163, Lys-164, and Thr-165 each contribute to the ATP site. Residues Arg-334–Phe-455 form a domain IV, binds dsDNA region.

The protein belongs to the DnaA family. In terms of assembly, oligomerizes as a right-handed, spiral filament on DNA at oriC.

The protein resides in the cytoplasm. In terms of biological role, plays an essential role in the initiation and regulation of chromosomal replication. ATP-DnaA binds to the origin of replication (oriC) to initiate formation of the DNA replication initiation complex once per cell cycle. Binds the DnaA box (a 9 base pair repeat at the origin) and separates the double-stranded (ds)DNA. Forms a right-handed helical filament on oriC DNA; dsDNA binds to the exterior of the filament while single-stranded (ss)DNA is stabiized in the filament's interior. The ATP-DnaA-oriC complex binds and stabilizes one strand of the AT-rich DNA unwinding element (DUE), permitting loading of DNA polymerase. After initiation quickly degrades to an ADP-DnaA complex that is not apt for DNA replication. Binds acidic phospholipids. The sequence is that of Chromosomal replication initiator protein DnaA from Lactococcus lactis subsp. lactis (strain IL1403) (Streptococcus lactis).